The following is a 330-amino-acid chain: Beta-1,6-galactofuranosyltransferase WbbI (330 aa).

Its subcellular location is the cytoplasm. The protein operates within bacterial outer membrane biogenesis; lipopolysaccharide biosynthesis. Functionally, involved in the transfer of galactofuranose (Galf) onto an alpha-D-gluco-configured acceptor substrate to form a beta-1,6-linkage. It uses n-octyl alpha-D-glucopyranoside as an acceptor substrate for the addition of galactofuranose from the donor substrate UDP-galactofuranose. It is not able to use beta-D-glucopyranoside isomers. The protein is Beta-1,6-galactofuranosyltransferase WbbI (wbbI) of Escherichia coli (strain K12).